Here is a 206-residue protein sequence, read N- to C-terminus: CMP-5'-(N-acetyl-N-hydroxy-3-aminopropyl)phosphonate hydrolase (206 aa).

One can recognise a Nudix hydrolase domain in the interval 37 to 166 (VRAPGAAIIV…RTVTSGTAIG (130 aa)). Residues 74 to 95 (GLVDDREDPAVTAAREAEEETG) carry the Nudix box motif. Low complexity predominate over residues 177–194 (RQQPGGVQEQPGGAQQQG). The segment at 177–206 (RQQPGGVQEQPGGAQQQGMNESHSGRTVRG) is disordered.

It belongs to the Nudix hydrolase family. Mg(2+) is required as a cofactor.

It catalyses the reaction CMP-5'-(N-acetyl-N-hydroxy-3-aminopropyl)phosphonate + H2O = 3-(N-acetyl-N-hydroxy)aminopropylphosphonate + CMP + H(+). The protein operates within antibiotic biosynthesis. Nucleotide hydrolase involved in the biosynthesis of the phosphonate antibiotic FR-900098, a potent antimalarial agent that acts as an inhibitor of 1-deoxy-D-xylulose 5-phosphate reductoisomerase (DXR), the first enzyme in the nonmevalonate pathway for isoprenoid biosynthesis. Catalyzes the hydrolysis of CMP-5'-(N-acetyl-N-hydroxy-3-aminopropyl)phosphonate (CMP-5'-FR-900098) to produce CMP and the final compound FR-900098. In vitro, has broad substrate specificity and also catalyzes the hydrolysis of all the other CMP-containing intermediates within the pathway and shows low activity toward CTP. The sequence is that of CMP-5'-(N-acetyl-N-hydroxy-3-aminopropyl)phosphonate hydrolase from Streptomyces rubellomurinus (strain ATCC 31215).